A 213-amino-acid chain; its full sequence is Octanoyltransferase (213 aa).

The BPL/LPL catalytic domain maps to 32–207; it reads DHTPDEIWLV…KLLALLNNPP (176 aa). Substrate-binding positions include 71–78, 138–140, and 151–153; these read RGGQVTYH, SLG, and GLA. The active-site Acyl-thioester intermediate is Cys169.

The protein belongs to the LipB family.

Its subcellular location is the cytoplasm. The enzyme catalyses octanoyl-[ACP] + L-lysyl-[protein] = N(6)-octanoyl-L-lysyl-[protein] + holo-[ACP] + H(+). It functions in the pathway protein modification; protein lipoylation via endogenous pathway; protein N(6)-(lipoyl)lysine from octanoyl-[acyl-carrier-protein]: step 1/2. Functionally, catalyzes the transfer of endogenously produced octanoic acid from octanoyl-acyl-carrier-protein onto the lipoyl domains of lipoate-dependent enzymes. Lipoyl-ACP can also act as a substrate although octanoyl-ACP is likely to be the physiological substrate. The protein is Octanoyltransferase of Enterobacter sp. (strain 638).